Consider the following 950-residue polypeptide: UPF0182 protein P9303_14611 (950 aa).

9 helical membrane passes run 20–40 (LLLSIAAFWLLMRVQVEWLWF), 53–73 (WLWQLGGLLLALLVVATCQLW), 102–122 (LLGCFVVVVGDLVLLTRLAWL), 141–161 (IWALVIPLSCVFISICVMLGN), 173–193 (CFCFSISIARGWGLWSLALAI), 209–229 (FGLGQFPALAFALVVLLAQLV), 259–279 (CDVMRPLIGIILLTLSALLWL), 308–328 (SLASLAILVLAFLVIPFPWIQ), and 335–355 (LIASIIGVGAILLEVLLAPFV).

It belongs to the UPF0182 family.

The protein resides in the cell membrane. The polypeptide is UPF0182 protein P9303_14611 (Prochlorococcus marinus (strain MIT 9303)).